Consider the following 301-residue polypeptide: Small ribosomal subunit protein uS2 (301 aa).

A disordered region spans residues 282 to 301 (VRKQPVSENENVEAAAAEQK). Residues 289–301 (ENENVEAAAAEQK) are compositionally biased toward low complexity.

It belongs to the universal ribosomal protein uS2 family.

The protein is Small ribosomal subunit protein uS2 of Koribacter versatilis (strain Ellin345).